A 292-amino-acid chain; its full sequence is Beta-lactamase-like protein 2 homolog (292 aa).

7 residues coordinate Zn(2+): H76, H78, D80, H81, H145, D163, and H198.

It belongs to the metallo-beta-lactamase superfamily. Glyoxalase II family.

In Drosophila melanogaster (Fruit fly), this protein is Beta-lactamase-like protein 2 homolog.